We begin with the raw amino-acid sequence, 200 residues long: 3-isopropylmalate dehydratase small subunit (200 aa).

This sequence belongs to the LeuD family. LeuD type 1 subfamily. As to quaternary structure, heterodimer of LeuC and LeuD.

It catalyses the reaction (2R,3S)-3-isopropylmalate = (2S)-2-isopropylmalate. It participates in amino-acid biosynthesis; L-leucine biosynthesis; L-leucine from 3-methyl-2-oxobutanoate: step 2/4. Its function is as follows. Catalyzes the isomerization between 2-isopropylmalate and 3-isopropylmalate, via the formation of 2-isopropylmaleate. The chain is 3-isopropylmalate dehydratase small subunit from Yersinia pestis bv. Antiqua (strain Antiqua).